The chain runs to 884 residues: Probable leucine-rich repeat receptor-like protein kinase At2g28990 (884 aa).

Positions 1 to 19 (MKIHLLLAMIGTFVVIIGA) are cleaved as a signal peptide. At 20 to 508 (QDQEGFISLD…TEKKNKFLLP (489 aa)) the chain is on the extracellular side. N70, N177, N217, N231, N251, N284, N298, N334, N418, N427, N438, N459, and N464 each carry an N-linked (GlcNAc...) asparagine glycan. LRR repeat units follow at residues 404 to 427 (SPTIISLDLSKSGLNGSIPQILQN), 428 to 451 (FTQLQELDLSNNSLTGPVPIFLAN), and 452 to 476 (MKTLSLINLSGNNLSGSVPQALLDK). The chain crosses the membrane as a helical span at residues 509–529 (VIASAASLVIVVVVVALFFVF). Residues 530–884 (RKKKASPSNL…IYNEVIPQAR (355 aa)) lie on the Cytoplasmic side of the membrane. A disordered region spans residues 535–559 (SPSNLHAPPSMPVSNPGHNSQSESS). Residues 546-559 (PVSNPGHNSQSESS) show a composition bias toward polar residues. T568 carries the post-translational modification Phosphothreonine. The Protein kinase domain occupies 577 to 850 (NNFDKALGEG…RVVNELKECL (274 aa)). ATP is bound by residues 583–591 (LGEGGFGVV) and K605. Phosphotyrosine is present on Y650. The Proton acceptor role is filled by D702. S736 is modified (phosphoserine). Phosphothreonine is present on residues T737 and T742. Y750 carries the phosphotyrosine modification.

Belongs to the protein kinase superfamily. Ser/Thr protein kinase family. As to quaternary structure, binds to the ammonium transporter AMT1-1.

It localises to the membrane. It carries out the reaction L-seryl-[protein] + ATP = O-phospho-L-seryl-[protein] + ADP + H(+). The catalysed reaction is L-threonyl-[protein] + ATP = O-phospho-L-threonyl-[protein] + ADP + H(+). This Arabidopsis thaliana (Mouse-ear cress) protein is Probable leucine-rich repeat receptor-like protein kinase At2g28990.